The following is a 342-amino-acid chain: UDP-N-acetylenolpyruvoylglucosamine reductase (342 aa).

The FAD-binding PCMH-type domain maps to 17–192 (RFEAAARYAA…AEVTFALPVD (176 aa)). Arginine 168 is a catalytic residue. Residue serine 242 is the Proton donor of the active site. Glutamate 338 is an active-site residue.

The protein belongs to the MurB family. Requires FAD as cofactor.

It localises to the cytoplasm. The enzyme catalyses UDP-N-acetyl-alpha-D-muramate + NADP(+) = UDP-N-acetyl-3-O-(1-carboxyvinyl)-alpha-D-glucosamine + NADPH + H(+). It participates in cell wall biogenesis; peptidoglycan biosynthesis. Functionally, cell wall formation. This Ralstonia nicotianae (strain ATCC BAA-1114 / GMI1000) (Ralstonia solanacearum) protein is UDP-N-acetylenolpyruvoylglucosamine reductase.